The sequence spans 564 residues: Sphingomyelin phosphodiesterase 1 (564 aa).

The signal sequence occupies residues methionine 1–alanine 17. The 85-residue stretch at phenylalanine 37 to threonine 121 folds into the Saposin B-type domain. 3 cysteine pairs are disulfide-bonded: cysteine 41/cysteine 117, cysteine 44/cysteine 110, and cysteine 72/cysteine 83. Asparagine 151 carries an N-linked (GlcNAc...) asparagine glycan. Positions 165 and 167 each coordinate Zn(2+). Disulfide bonds link cysteine 180–cysteine 185 and cysteine 186–cysteine 206. An N-linked (GlcNAc...) asparagine glycan is attached at asparagine 221. Aspartate 234 and asparagine 274 together coordinate Zn(2+). An intrachain disulfide couples cysteine 341 to cysteine 389. A glycan (N-linked (GlcNAc...) asparagine) is linked at asparagine 351. Residues histidine 381, histidine 415, and histidine 417 each coordinate Zn(2+). A glycan (N-linked (GlcNAc...) asparagine) is linked at asparagine 430. Disulfide bonds link cysteine 538–cysteine 542 and cysteine 548–cysteine 561. N-linked (GlcNAc...) asparagine glycosylation is present at asparagine 556.

This sequence belongs to the acid sphingomyelinase family. Requires Zn(2+) as cofactor.

The protein resides in the secreted. The enzyme catalyses a sphingomyelin + H2O = phosphocholine + an N-acylsphing-4-enine + H(+). The catalysed reaction is an N-acyl-15-methylhexadecasphing-4-enine-1-phosphocholine + H2O = an N-acyl-15-methylhexadecasphing-4-enine + phosphocholine + H(+). Its pathway is lipid metabolism; sphingolipid metabolism. Its function is as follows. Sphingomyelin phosphodiesterase (sphingomyelinase) that converts sphingomyelin to ceramide (N-acyl-sphingoid base) and phosphocholine at acidic pH. Displays its enzymatic activity when secreted. May play distinct roles in signaling. This is Sphingomyelin phosphodiesterase 1 (asm-1) from Caenorhabditis elegans.